A 266-amino-acid polypeptide reads, in one-letter code: Thiazole synthase (266 aa).

Lys95 acts as the Schiff-base intermediate with DXP in catalysis. Residues Gly156, 182–183 (AG), and 204–205 (NT) contribute to the 1-deoxy-D-xylulose 5-phosphate site.

The protein belongs to the ThiG family. As to quaternary structure, homotetramer. Forms heterodimers with either ThiH or ThiS.

It is found in the cytoplasm. It carries out the reaction [ThiS sulfur-carrier protein]-C-terminal-Gly-aminoethanethioate + 2-iminoacetate + 1-deoxy-D-xylulose 5-phosphate = [ThiS sulfur-carrier protein]-C-terminal Gly-Gly + 2-[(2R,5Z)-2-carboxy-4-methylthiazol-5(2H)-ylidene]ethyl phosphate + 2 H2O + H(+). It functions in the pathway cofactor biosynthesis; thiamine diphosphate biosynthesis. In terms of biological role, catalyzes the rearrangement of 1-deoxy-D-xylulose 5-phosphate (DXP) to produce the thiazole phosphate moiety of thiamine. Sulfur is provided by the thiocarboxylate moiety of the carrier protein ThiS. In vitro, sulfur can be provided by H(2)S. This is Thiazole synthase from Shewanella denitrificans (strain OS217 / ATCC BAA-1090 / DSM 15013).